Here is a 316-residue protein sequence, read N- to C-terminus: Acetaldehyde dehydrogenase (316 aa).

An NAD(+)-binding site is contributed by 11–14; the sequence is SGNI. Cys131 acts as the Acyl-thioester intermediate in catalysis. NAD(+)-binding positions include 162–170 and Asn289; that span reads SAGPGTRAN.

Belongs to the acetaldehyde dehydrogenase family. As to quaternary structure, interacts with MhpE.

It catalyses the reaction acetaldehyde + NAD(+) + CoA = acetyl-CoA + NADH + H(+). It participates in aromatic compound metabolism; 3-phenylpropanoate degradation. Functionally, catalyzes the conversion of acetaldehyde to acetyl-CoA, using NAD(+) and coenzyme A. Is the final enzyme in the meta-cleavage pathway for the degradation of aromatic compounds. In Klebsiella pneumoniae subsp. pneumoniae (strain ATCC 700721 / MGH 78578), this protein is Acetaldehyde dehydrogenase.